The chain runs to 346 residues: UDP-3-O-acylglucosamine N-acyltransferase (346 aa).

Histidine 253 serves as the catalytic Proton acceptor.

It belongs to the transferase hexapeptide repeat family. LpxD subfamily. Homotrimer.

The enzyme catalyses a UDP-3-O-[(3R)-3-hydroxyacyl]-alpha-D-glucosamine + a (3R)-hydroxyacyl-[ACP] = a UDP-2-N,3-O-bis[(3R)-3-hydroxyacyl]-alpha-D-glucosamine + holo-[ACP] + H(+). The protein operates within bacterial outer membrane biogenesis; LPS lipid A biosynthesis. Catalyzes the N-acylation of UDP-3-O-acylglucosamine using 3-hydroxyacyl-ACP as the acyl donor. Is involved in the biosynthesis of lipid A, a phosphorylated glycolipid that anchors the lipopolysaccharide to the outer membrane of the cell. This is UDP-3-O-acylglucosamine N-acyltransferase from Rickettsia akari (strain Hartford).